Reading from the N-terminus, the 628-residue chain is Dual specificity testis-specific protein kinase 1 (628 aa).

The segment at 1–35 (MAGERPPLRGPGPGETPVEGPGGAGGGPGRGRPSS) is disordered. A compositionally biased stretch (gly residues) spans 20-30 (GPGGAGGGPGR). The Protein kinase domain maps to 52-310 (FDCAEKIGAG…EITQHLEQIL (259 aa)). ATP contacts are provided by residues 58–66 (IGAGFFSEV) and lysine 81. Aspartate 170 acts as the Proton acceptor in catalysis. At serine 215 the chain carries Phosphoserine; by autocatalysis. Disordered regions lie at residues 330–376 (TYNQ…DNLT), 424–490 (PESL…QLPL), and 538–568 (RAQH…EEGL). Arginine 338 carries the post-translational modification Omega-N-methylarginine. A compositionally biased stretch (basic and acidic residues) spans 348–357 (SDPRLSRSRS). Residues 421-526 (VASPESLVQP…NNNPPAVVVN (106 aa)) form a required for interaction with YWHAB region. Residue serine 439 is modified to Phosphoserine. The segment covering 478-487 (EPEPPGPAPQ) has biased composition (pro residues). Residues 529–626 (QGWAREPWNR…PTPSLQLPGA (98 aa)) are required for interaction with PARVA. Positions 529-628 (QGWAREPWNR…PSLQLPGARS (100 aa)) are required for interaction with SPRED1 and SPRY2. Required for TESK1-mediated dephosphorylation of SPRY2 and SPRY2 inhibition of ERK phosphorylation.

Belongs to the protein kinase superfamily. TKL Ser/Thr protein kinase family. In terms of assembly, interacts (via both C- and N-termini) with SPRY4 (via C-terminus); the interaction inhibits TESK1 kinase activity. Interacts with TAOK1; the interaction inhibits TAOK1 kinase activity. Interacts (via C-terminus) with SPRED1 (via C-terminus); the interaction inhibits TESK1 kinase activity. Interacts (via C-terminus) with PARVA/PARVIN (via C-terminus); the interaction inhibits TESK1 kinase activity. Interacts with YWHAB/14-3-3 beta; the interaction is dependent on the phosphorylation of TESK1 Ser-439 and inhibits TESK1 kinase activity. Interacts with SPRY1, SPRY3 and SPRED2. Interacts (via C-terminus) with SPRY2 (via C-terminus); the interaction disrupts SPRY2 interaction with PPP2CA/PP2A-C, possibly by vesicular sequestration of SPRY2. Therefore dephosphorylation of SPRY2 by the serine/threonine-protein phosphatase 2A (PP2A) holoenzyme is lost, inhibiting its interaction with GRB2. Mg(2+) serves as cofactor. Requires Mn(2+) as cofactor. Post-translationally, autophosphorylated on serine and tyrosine residues. As to expression, weakly expressed in sciatic nerves (at protein level). Highly expressed in testicular germ cells. Expressed at low levels in brain, lung, heart, liver and kidney.

The protein localises to the cytoplasm. The protein resides in the perinuclear region. It is found in the cytoskeleton. It localises to the microtubule organizing center. Its subcellular location is the centrosome. The protein localises to the cell projection. The protein resides in the lamellipodium. It catalyses the reaction L-seryl-[protein] + ATP = O-phospho-L-seryl-[protein] + ADP + H(+). The catalysed reaction is L-threonyl-[protein] + ATP = O-phospho-L-threonyl-[protein] + ADP + H(+). It carries out the reaction L-tyrosyl-[protein] + ATP = O-phospho-L-tyrosyl-[protein] + ADP + H(+). Its activity is regulated as follows. Activated by autophosphorylation on Ser-215. Kinase activity is inhibited by SPRED1. In terms of biological role, dual specificity protein kinase activity catalyzing autophosphorylation and phosphorylation of exogenous substrates on both serine/threonine and tyrosine residues. Regulates the cellular cytoskeleton by enhancing actin stress fiber formation via phosphorylation of cofilin and by preventing microtubule breakdown via inhibition of TAOK1/MARKK kinase activity. Inhibits podocyte motility via regulation of actin cytoskeletal dynamics and phosphorylation of CFL1. Positively regulates integrin-mediated cell spreading, via phosphorylation of cofilin. Suppresses ciliogenesis via multiple pathways; phosphorylation of CFL1, suppression of ciliary vesicle directional trafficking to the ciliary base, and by facilitating YAP1 nuclear localization where it acts as a transcriptional corepressor of the TEAD4 target genes AURKA and PLK1. Probably plays a central role at and after the meiotic phase of spermatogenesis. The sequence is that of Dual specificity testis-specific protein kinase 1 (Tesk1) from Rattus norvegicus (Rat).